The chain runs to 896 residues: Protein translocase subunit SecA (896 aa).

Residues Gln-87, 105-109 (GEGKT), and Asp-507 each bind ATP. The tract at residues 853 to 879 (ESLSENDEASETQTFRRQEKKIGRNDP) is disordered. Residues 866–876 (TFRRQEKKIGR) are compositionally biased toward basic and acidic residues. The Zn(2+) site is built by Cys-880, Cys-882, Cys-891, and His-892.

It belongs to the SecA family. Monomer and homodimer. Part of the essential Sec protein translocation apparatus which comprises SecA, SecYEG and auxiliary proteins SecDF-YajC and YidC. Requires Zn(2+) as cofactor.

Its subcellular location is the cell inner membrane. It localises to the cytoplasm. The enzyme catalyses ATP + H2O + cellular proteinSide 1 = ADP + phosphate + cellular proteinSide 2.. Its function is as follows. Part of the Sec protein translocase complex. Interacts with the SecYEG preprotein conducting channel. Has a central role in coupling the hydrolysis of ATP to the transfer of proteins into and across the cell membrane, serving both as a receptor for the preprotein-SecB complex and as an ATP-driven molecular motor driving the stepwise translocation of polypeptide chains across the membrane. In Legionella pneumophila subsp. pneumophila (strain Philadelphia 1 / ATCC 33152 / DSM 7513), this protein is Protein translocase subunit SecA.